The primary structure comprises 662 residues: Protein transport Sec1b (662 aa).

Belongs to the STXBP/unc-18/SEC1 family.

Involved in the vesicle trafficking. Binds syntaxins. This chain is Protein transport Sec1b (SEC1B), found in Arabidopsis thaliana (Mouse-ear cress).